An 82-amino-acid polypeptide reads, in one-letter code: ATP synthase subunit c, chloroplastic (82 aa).

Met-1 is modified (N-formylmethionine). 2 helical membrane passes run 3–23 (PIVA…AAIG) and 57–77 (FAFM…LLFA).

This sequence belongs to the ATPase C chain family. As to quaternary structure, F-type ATPases have 2 components, F(1) - the catalytic core - and F(0) - the membrane proton channel. F(1) has five subunits: alpha(3), beta(3), gamma(1), delta(1), epsilon(1). F(0) has four main subunits: a(1), b(1), b'(1) and c(10-14). The alpha and beta chains form an alternating ring which encloses part of the gamma chain. F(1) is attached to F(0) by a central stalk formed by the gamma and epsilon chains, while a peripheral stalk is formed by the delta, b and b' chains.

The protein resides in the plastid. Its subcellular location is the chloroplast thylakoid membrane. Its function is as follows. F(1)F(0) ATP synthase produces ATP from ADP in the presence of a proton or sodium gradient. F-type ATPases consist of two structural domains, F(1) containing the extramembraneous catalytic core and F(0) containing the membrane proton channel, linked together by a central stalk and a peripheral stalk. During catalysis, ATP synthesis in the catalytic domain of F(1) is coupled via a rotary mechanism of the central stalk subunits to proton translocation. Key component of the F(0) channel; it plays a direct role in translocation across the membrane. A homomeric c-ring of between 10-14 subunits forms the central stalk rotor element with the F(1) delta and epsilon subunits. The sequence is that of ATP synthase subunit c, chloroplastic from Chlamydomonas reinhardtii (Chlamydomonas smithii).